Reading from the N-terminus, the 554-residue chain is Urocanate hydratase (554 aa).

Residues 50 to 51, Q128, 174 to 176, E194, R199, 240 to 241, 261 to 265, 271 to 272, and Y320 each bind NAD(+); these read GG, GMG, NA, QTSAH, and YI. Residue C408 is part of the active site. Residue G490 participates in NAD(+) binding.

The protein belongs to the urocanase family. It depends on NAD(+) as a cofactor.

It is found in the cytoplasm. The catalysed reaction is 4-imidazolone-5-propanoate = trans-urocanate + H2O. Its pathway is amino-acid degradation; L-histidine degradation into L-glutamate; N-formimidoyl-L-glutamate from L-histidine: step 2/3. Its function is as follows. Catalyzes the conversion of urocanate to 4-imidazolone-5-propionate. This Rubrobacter xylanophilus (strain DSM 9941 / JCM 11954 / NBRC 16129 / PRD-1) protein is Urocanate hydratase.